The following is a 431-amino-acid chain: 5-methylthioadenosine/S-adenosylhomocysteine deaminase (431 aa).

Zn(2+) contacts are provided by His-63 and His-65. 3 residues coordinate substrate: Glu-92, Arg-144, and His-184. His-211 contacts Zn(2+). Glu-214 and Asp-299 together coordinate substrate. Asp-299 contributes to the Zn(2+) binding site.

This sequence belongs to the metallo-dependent hydrolases superfamily. MTA/SAH deaminase family. Zn(2+) serves as cofactor.

It catalyses the reaction S-adenosyl-L-homocysteine + H2O + H(+) = S-inosyl-L-homocysteine + NH4(+). The enzyme catalyses S-methyl-5'-thioadenosine + H2O + H(+) = S-methyl-5'-thioinosine + NH4(+). In terms of biological role, catalyzes the deamination of 5-methylthioadenosine and S-adenosyl-L-homocysteine into 5-methylthioinosine and S-inosyl-L-homocysteine, respectively. Is also able to deaminate adenosine. The protein is 5-methylthioadenosine/S-adenosylhomocysteine deaminase of Thermoanaerobacter pseudethanolicus (strain ATCC 33223 / 39E) (Clostridium thermohydrosulfuricum).